The sequence spans 220 residues: Charged multivesicular body protein 2a (220 aa).

2 coiled-coil regions span residues 12–53 (EELL…MAKQ) and 198–219 (EATAALADADADLEERLNNLRR). The interval 196-220 (KGEATAALADADADLEERLNNLRRD) is disordered. The short motif at 208–218 (ADLEERLNNLR) is the MIT-interacting motif element. Basic and acidic residues predominate over residues 211–220 (EERLNNLRRD).

It belongs to the SNF7 family. Probable core component of the endosomal sorting required for transport complex III (ESCRT-III). ESCRT-III components are thought to multimerize to form a flat lattice on the perimeter membrane of the endosome.

It is found in the late endosome membrane. The protein resides in the cytoplasm. Its function is as follows. Probable core component of the endosomal sorting required for transport complex III (ESCRT-III) which is involved in multivesicular bodies (MVBs) formation and sorting of endosomal cargo proteins into MVBs. MVBs contain intraluminal vesicles (ILVs) that are generated by invagination and scission from the limiting membrane of the endosome and mostly are delivered to lysosomes enabling degradation of membrane proteins, such as stimulated growth factor receptors, lysosomal enzymes and lipids. This chain is Charged multivesicular body protein 2a (chmp2a), found in Xenopus laevis (African clawed frog).